Reading from the N-terminus, the 309-residue chain is Ferrochelatase (309 aa).

Residues histidine 185 and glutamate 262 each contribute to the Fe cation site.

This sequence belongs to the ferrochelatase family.

It localises to the cytoplasm. It catalyses the reaction heme b + 2 H(+) = protoporphyrin IX + Fe(2+). Its pathway is porphyrin-containing compound metabolism; protoheme biosynthesis; protoheme from protoporphyrin-IX: step 1/1. Catalyzes the ferrous insertion into protoporphyrin IX. This is Ferrochelatase from Campylobacter jejuni subsp. jejuni serotype O:23/36 (strain 81-176).